Reading from the N-terminus, the 689-residue chain is DNA ligase (689 aa).

Residues 32-36 (DAEYD), 81-82 (SL), and E113 each bind NAD(+). The N6-AMP-lysine intermediate role is filled by K115. NAD(+)-binding residues include R136, E176, K306, and K330. Zn(2+)-binding residues include C424, C427, C442, and C448. In terms of domain architecture, BRCT spans 606-689 (AEELPLAEQI…ALLAEHGITI (84 aa)).

This sequence belongs to the NAD-dependent DNA ligase family. LigA subfamily. The cofactor is Mg(2+). Mn(2+) serves as cofactor.

The enzyme catalyses NAD(+) + (deoxyribonucleotide)n-3'-hydroxyl + 5'-phospho-(deoxyribonucleotide)m = (deoxyribonucleotide)n+m + AMP + beta-nicotinamide D-nucleotide.. Functionally, DNA ligase that catalyzes the formation of phosphodiester linkages between 5'-phosphoryl and 3'-hydroxyl groups in double-stranded DNA using NAD as a coenzyme and as the energy source for the reaction. It is essential for DNA replication and repair of damaged DNA. The sequence is that of DNA ligase from Colwellia psychrerythraea (strain 34H / ATCC BAA-681) (Vibrio psychroerythus).